The primary structure comprises 481 residues: Abietadienol/abietadienal oxidase (481 aa).

The chain crosses the membrane as a helical span at residues 2–22 (ADQISLLLVVFTAAVALLHLI). Heme is bound at residue Cys430.

Belongs to the cytochrome P450 family. It depends on heme as a cofactor. As to expression, expressed in young tissues such as flushing buds and green bark tissues. Lower levels in mature needles and bark.

It is found in the membrane. The catalysed reaction is abieta-7,13-dien-18-ol + 2 reduced [NADPH--hemoprotein reductase] + 2 O2 = abieta-7,13-dien-18-oate + 2 oxidized [NADPH--hemoprotein reductase] + 3 H2O + 3 H(+). Multifunctional and multisubstrate cytochrome P450 that oxidizes the respective carbon 18 of abietadienol, abietadienal, levopimaradienol, isopimara-7,15-dienol, isopimara-7,15-dienal, dehydroabietadienol, and dehydroabietadienal. The chain is Abietadienol/abietadienal oxidase (CYP720B1) from Pinus taeda (Loblolly pine).